The primary structure comprises 270 residues: NAD kinase (270 aa).

Residue Asp45 is the Proton acceptor of the active site. NAD(+) is bound by residues 45 to 46 (DG), 121 to 122 (NE), Lys147, Asp149, 160 to 165 (TAYSKS), and Ala184.

It belongs to the NAD kinase family. A divalent metal cation serves as cofactor.

It localises to the cytoplasm. The enzyme catalyses NAD(+) + ATP = ADP + NADP(+) + H(+). Functionally, involved in the regulation of the intracellular balance of NAD and NADP, and is a key enzyme in the biosynthesis of NADP. Catalyzes specifically the phosphorylation on 2'-hydroxyl of the adenosine moiety of NAD to yield NADP. The sequence is that of NAD kinase from Lactobacillus johnsonii (strain CNCM I-12250 / La1 / NCC 533).